The chain runs to 755 residues: Glucosylglycerol-phosphate synthase (755 aa).

This sequence belongs to the glycosyltransferase 20 family.

It catalyses the reaction ADP-alpha-D-glucose + sn-glycerol 3-phosphate = 2-O-(alpha-D-glucopyranosyl)-sn-glycerol 3-phosphate + ADP + H(+). Its pathway is glycan metabolism; glucosylglycerol biosynthesis. In terms of biological role, involved in salt tolerance by producing GG-phosphate from ADP-glucose and glycerol-3-phosphate (G3P), an intermediate in the synthesis of the osmolyte glucosylglycerol (GG). The polypeptide is Glucosylglycerol-phosphate synthase (ggpS) (Pseudomonas anguilliseptica).